The chain runs to 144 residues: Snake venom vascular endothelial growth factor toxin cratrin (144 aa).

Positions M1 to G24 are cleaved as a signal peptide. Position 25 is a pyrrolidone carboxylic acid (Q25). Disulfide bonds link C38/C80, C69/C115, and C73/C117. Positions P119–V144 are disordered. Residues P132–V144 show a composition bias toward basic and acidic residues.

The protein belongs to the PDGF/VEGF growth factor family. Snake venom VEGF subfamily. In terms of assembly, homodimer; disulfide-linked. Interacts with VEGF receptor-1 (FLT1) with a high affinity, whereas it binds to VEGF receptor-2 (KDR) with a low affinity. Does not bind VEGF receptor-3 (FLT4). As to expression, expressed by the venom gland.

It localises to the secreted. Its function is as follows. Snake venom VEGFs that may contribute to venom dispersion and prey subjugation by inducing vascular permeability and hypotension. This protein induces an increase in capillary permeability after intradermal injection, as well as a drastic hypotensive effect after intravenous injection. The hypotension is mediated by nitric oxide (NO), which is produced by VEGF-activated endothelium NO synthase. Also induces angiogenesis in vitro. Like other crotalid VEGFs, this protein interacts with VEGF receptor-1 (FLT1) with a high affinity, whereas it binds to VEGF receptor-2 (KDR) with a low affinity. The sequence is that of Snake venom vascular endothelial growth factor toxin cratrin from Crotalus atrox (Western diamondback rattlesnake).